Consider the following 479-residue polypeptide: Lactaldehyde dehydrogenase (479 aa).

Position 150 (Leu150) interacts with NAD(+). Residue Arg161 participates in (S)-lactate binding. Residues 176-179 (KPSE), Gln214, and Ser230 contribute to the NAD(+) site. Position 251 (Glu251) interacts with (S)-lactate. Residues Glu251 and Cys285 contribute to the active site. Asn286 is a (S)-lactate binding site. Arg336 serves as a coordination point for NAD(+). Residues Glu443 and His449 each coordinate (S)-lactate.

Belongs to the aldehyde dehydrogenase family. In terms of assembly, homotetramer.

The enzyme catalyses (S)-lactaldehyde + NAD(+) + H2O = (S)-lactate + NADH + 2 H(+). It catalyses the reaction glycolaldehyde + NAD(+) + H2O = glycolate + NADH + 2 H(+). It participates in carbohydrate degradation; L-fucose degradation. The protein operates within carbohydrate degradation; L-rhamnose degradation. Its activity is regulated as follows. Substrate inhibition is very strong with lactaldehyde, diminishing progressively with glycolaldehyde, glyceraldehyde or methylglyoxal. Inhibited by p-hydroxy mercuribenzoate and by some cations, including Mn(2+), Ca(2+), Cu(2+) and Zn(2+). Inhibited by NADH. Its function is as follows. Catalyzes the irreversible oxidation of L-lactaldehyde to L-lactate. Also shows high activity with glycolaldehyde and L-glyceraldehyde. Has weaker activity with various aldehydes such as methylglyoxal, propionaldehyde or benzaldehyde. Involved in the degradation of lactaldehyde produced during metabolism of L-fucose and L-rhamnose. It may be involved in several other metabolic pathways. The polypeptide is Lactaldehyde dehydrogenase (aldA) (Escherichia coli (strain K12)).